A 465-amino-acid chain; its full sequence is Phosphatidylserine synthase 1 (465 aa).

The Cytoplasmic portion of the chain corresponds to 1-35 (MVSAMRSRTLSKDDVNYKMHFRMINEQQVEDITID). Residues 36–56 (FFYKPHTITLLTFTTVSLMYF) form a helical membrane-spanning segment. Topologically, residues 57-68 (AFTRENTSQEDN) are lumenal. Residues 69-89 (IWKGILSVIFFFLIISVLAFP) form a helical membrane-spanning segment. Residues 90 to 102 (NGPFTRPHPAIWR) lie on the Cytoplasmic side of the membrane. A helical transmembrane segment spans residues 103–123 (MVFGLSVLYFLFLVFLLFLNV). The Lumenal portion of the chain corresponds to 124-186 (EQVKAVMYWL…AMKALLIRSY (63 aa)). A helical transmembrane segment spans residues 187 to 207 (GLCWTISITWEMTELFFMHLL). The Cytoplasmic segment spans residues 208 to 216 (PNFAECWWD). The helical transmembrane segment at 217–237 (QVILDILLCNGGGILLGMVVC) threads the bilayer. The Lumenal segment spans residues 238-286 (RFLEMRTYHWASFKDIHTTTGKIKRAVLQFTPASWIYVRWFDPKSSFQR). The chain crosses the membrane as a helical span at residues 287–307 (VAGVYLFMIIWQLTELNTFFL). The Cytoplasmic segment spans residues 308 to 319 (KHIFVFQASHPL). Residues 320–342 (SWCRILFIGIITAPTVRQYYAYL) form a helical membrane-spanning segment. Topologically, residues 343–355 (TDTQCKRVGTQCW) are lumenal. A helical transmembrane segment spans residues 356-376 (VFGAIAFLEATVCIKFGQDLF). The Cytoplasmic portion of the chain corresponds to 377-383 (SKTHLLY). Residues 384 to 404 (VFLWLFSVAVITFLCLYGMVW) form a helical membrane-spanning segment. Residues 405-465 (YADYCGQREK…GKVTNGVGKK (61 aa)) are Lumenal-facing. The segment at 440-465 (PVKQNEGTSRRKNRHKGKVTNGVGKK) is disordered. The segment covering 449–465 (RRKNRHKGKVTNGVGKK) has biased composition (basic residues).

The protein belongs to the phosphatidyl serine synthase family.

The protein localises to the endoplasmic reticulum membrane. The enzyme catalyses a 1,2-diacyl-sn-glycero-3-phosphoethanolamine + L-serine = a 1,2-diacyl-sn-glycero-3-phospho-L-serine + ethanolamine. The catalysed reaction is a 1,2-diacyl-sn-glycero-3-phosphocholine + L-serine = a 1,2-diacyl-sn-glycero-3-phospho-L-serine + choline. It functions in the pathway phospholipid metabolism; phosphatidylserine biosynthesis. Its function is as follows. Catalyzes a base-exchange reaction in which the polar head group of phosphatidylethanolamine (PE) or phosphatidylcholine (PC) is replaced by L-serine. Catalyzes mainly the conversion of phosphatidylcholine but also converts, in vitro and to a lesser extent, phosphatidylethanolamine. The polypeptide is Phosphatidylserine synthase 1 (ptdss1) (Xenopus tropicalis (Western clawed frog)).